We begin with the raw amino-acid sequence, 542 residues long: GMP synthase [glutamine-hydrolyzing] (542 aa).

The Glutamine amidotransferase type-1 domain maps to 28 to 218 (MLVILDFGSQ…VYHICQCEPT (191 aa)). Cys105 serves as the catalytic Nucleophile. Residues His192 and Glu194 contribute to the active site. One can recognise a GMPS ATP-PPase domain in the interval 219 to 417 (WTTEAFVEES…IGLPEEIVRR (199 aa)). 246 to 252 (SGGVDSS) is an ATP binding site.

Homodimer.

It catalyses the reaction XMP + L-glutamine + ATP + H2O = GMP + L-glutamate + AMP + diphosphate + 2 H(+). Its pathway is purine metabolism; GMP biosynthesis; GMP from XMP (L-Gln route): step 1/1. In terms of biological role, catalyzes the synthesis of GMP from XMP. The polypeptide is GMP synthase [glutamine-hydrolyzing] (Rippkaea orientalis (strain PCC 8801 / RF-1) (Cyanothece sp. (strain PCC 8801))).